Reading from the N-terminus, the 306-residue chain is Curved DNA-binding protein (306 aa).

One can recognise a J domain in the interval 5–69 (DYYAIMGVKP…QRRAEYDQMW (65 aa)).

The protein localises to the cytoplasm. The protein resides in the nucleoid. DNA-binding protein that preferentially recognizes a curved DNA sequence. It is probably a functional analog of DnaJ; displays overlapping activities with DnaJ, but functions under different conditions, probably acting as a molecular chaperone in an adaptive response to environmental stresses other than heat shock. Lacks autonomous chaperone activity; binds native substrates and targets them for recognition by DnaK. Its activity is inhibited by the binding of CbpM. The protein is Curved DNA-binding protein of Shigella boydii serotype 18 (strain CDC 3083-94 / BS512).